The chain runs to 585 residues: DNA ligase (585 aa).

Position 278 (Glu-278) interacts with ATP. Lys-280 serves as the catalytic N6-AMP-lysine intermediate. ATP contacts are provided by Arg-285, Arg-301, Glu-330, Phe-370, Arg-444, and Lys-450.

Belongs to the ATP-dependent DNA ligase family. It depends on Mg(2+) as a cofactor.

The enzyme catalyses ATP + (deoxyribonucleotide)n-3'-hydroxyl + 5'-phospho-(deoxyribonucleotide)m = (deoxyribonucleotide)n+m + AMP + diphosphate.. In terms of biological role, DNA ligase that seals nicks in double-stranded DNA during DNA replication, DNA recombination and DNA repair. The protein is DNA ligase of Haloferax volcanii (strain ATCC 29605 / DSM 3757 / JCM 8879 / NBRC 14742 / NCIMB 2012 / VKM B-1768 / DS2) (Halobacterium volcanii).